A 118-amino-acid polypeptide reads, in one-letter code: Large ribosomal subunit protein bL20 (118 aa).

This sequence belongs to the bacterial ribosomal protein bL20 family.

Binds directly to 23S ribosomal RNA and is necessary for the in vitro assembly process of the 50S ribosomal subunit. It is not involved in the protein synthesizing functions of that subunit. This is Large ribosomal subunit protein bL20 from Rhodopirellula baltica (strain DSM 10527 / NCIMB 13988 / SH1).